Consider the following 403-residue polypeptide: Probable tRNA sulfurtransferase (403 aa).

A THUMP domain is found at 60–165; sequence QLVEERLKPI…KEGVFLSCRT (106 aa). ATP is bound by residues 183-184, 208-209, arginine 265, glycine 287, and glutamine 296; these read ML and HF.

The protein belongs to the ThiI family.

The protein localises to the cytoplasm. The enzyme catalyses [ThiI sulfur-carrier protein]-S-sulfanyl-L-cysteine + a uridine in tRNA + 2 reduced [2Fe-2S]-[ferredoxin] + ATP + H(+) = [ThiI sulfur-carrier protein]-L-cysteine + a 4-thiouridine in tRNA + 2 oxidized [2Fe-2S]-[ferredoxin] + AMP + diphosphate. The catalysed reaction is [ThiS sulfur-carrier protein]-C-terminal Gly-Gly-AMP + S-sulfanyl-L-cysteinyl-[cysteine desulfurase] + AH2 = [ThiS sulfur-carrier protein]-C-terminal-Gly-aminoethanethioate + L-cysteinyl-[cysteine desulfurase] + A + AMP + 2 H(+). It participates in cofactor biosynthesis; thiamine diphosphate biosynthesis. Catalyzes the ATP-dependent transfer of a sulfur to tRNA to produce 4-thiouridine in position 8 of tRNAs, which functions as a near-UV photosensor. Also catalyzes the transfer of sulfur to the sulfur carrier protein ThiS, forming ThiS-thiocarboxylate. This is a step in the synthesis of thiazole, in the thiamine biosynthesis pathway. The sulfur is donated as persulfide by IscS. This Listeria monocytogenes serotype 4b (strain CLIP80459) protein is Probable tRNA sulfurtransferase.